The chain runs to 211 residues: Uridine kinase (211 aa).

13 to 20 (GGTASGKT) provides a ligand contact to ATP.

This sequence belongs to the uridine kinase family.

The protein resides in the cytoplasm. It catalyses the reaction uridine + ATP = UMP + ADP + H(+). It carries out the reaction cytidine + ATP = CMP + ADP + H(+). The protein operates within pyrimidine metabolism; CTP biosynthesis via salvage pathway; CTP from cytidine: step 1/3. It participates in pyrimidine metabolism; UMP biosynthesis via salvage pathway; UMP from uridine: step 1/1. The chain is Uridine kinase from Thermus thermophilus (strain ATCC BAA-163 / DSM 7039 / HB27).